An 880-amino-acid chain; its full sequence is DNA polymerase I (880 aa).

A 5'-3' exonuclease domain is found at 174 to 268 (TPEQIIDMKG…SGLEYQGFNR (95 aa)). Residues 302 to 470 (DINVKTVTDV…LREKLVQELE (169 aa)) form the 3'-5' exonuclease domain.

This sequence belongs to the DNA polymerase type-A family. As to quaternary structure, single-chain monomer with multiple functions.

The catalysed reaction is DNA(n) + a 2'-deoxyribonucleoside 5'-triphosphate = DNA(n+1) + diphosphate. Its function is as follows. In addition to polymerase activity, this DNA polymerase exhibits 3'-5' and 5'-3' exonuclease activity. This chain is DNA polymerase I (polA), found in Bacillus subtilis (strain 168).